Reading from the N-terminus, the 349-residue chain is Hydroxymethylglutaryl-CoA synthase (349 aa).

(3S)-3-hydroxy-3-methylglutaryl-CoA is bound by residues Asp29 and Ala30. Glu81 serves as the catalytic Proton donor/acceptor. (3S)-3-hydroxy-3-methylglutaryl-CoA contacts are provided by Cys113 and Thr154. Catalysis depends on Cys113, which acts as the Acyl-thioester intermediate. Arg202 provides a ligand contact to CoA. (3S)-3-hydroxy-3-methylglutaryl-CoA is bound by residues Thr204 and His237. His237 acts as the Proton donor/acceptor in catalysis. A CoA-binding site is contributed by Lys242. 3 residues coordinate (3S)-3-hydroxy-3-methylglutaryl-CoA: Lys246, Asn269, and Ser299.

This sequence belongs to the thiolase-like superfamily. Archaeal HMG-CoA synthase family. In terms of assembly, interacts with acetoacetyl-CoA thiolase that catalyzes the precedent step in the pathway and with a DUF35 protein. The acetoacetyl-CoA thiolase/HMG-CoA synthase complex channels the intermediate via a fused CoA-binding site, which allows for efficient coupling of the endergonic thiolase reaction with the exergonic HMGCS reaction.

The catalysed reaction is acetoacetyl-CoA + acetyl-CoA + H2O = (3S)-3-hydroxy-3-methylglutaryl-CoA + CoA + H(+). Its pathway is metabolic intermediate biosynthesis; (R)-mevalonate biosynthesis; (R)-mevalonate from acetyl-CoA: step 2/3. Functionally, catalyzes the condensation of acetyl-CoA with acetoacetyl-CoA to form 3-hydroxy-3-methylglutaryl-CoA (HMG-CoA). Functions in the mevalonate (MVA) pathway leading to isopentenyl diphosphate (IPP), a key precursor for the biosynthesis of isoprenoid compounds that are building blocks of archaeal membrane lipids. In Methanosarcina barkeri (strain Fusaro / DSM 804), this protein is Hydroxymethylglutaryl-CoA synthase.